The following is a 454-amino-acid chain: tRNA modification GTPase MnmE (454 aa).

Residues Arg23, Glu80, and Lys120 each contribute to the (6S)-5-formyl-5,6,7,8-tetrahydrofolate site. The TrmE-type G domain occupies 216 to 377 (GMKVVIAGRP…LRNHLKQSMG (162 aa)). Position 226 (Asn226) interacts with K(+). Residues 226–231 (NAGKSS), 245–251 (TDIAGTT), 270–273 (DTAG), 335–338 (NKAD), and 358–360 (SAR) each bind GTP. A Mg(2+)-binding site is contributed by Ser230. Residues Thr245, Ile247, and Thr250 each contribute to the K(+) site. Thr251 provides a ligand contact to Mg(2+). (6S)-5-formyl-5,6,7,8-tetrahydrofolate is bound at residue Lys454.

This sequence belongs to the TRAFAC class TrmE-Era-EngA-EngB-Septin-like GTPase superfamily. TrmE GTPase family. As to quaternary structure, homodimer. Heterotetramer of two MnmE and two MnmG subunits. The cofactor is K(+).

The protein localises to the cytoplasm. Exhibits a very high intrinsic GTPase hydrolysis rate. Involved in the addition of a carboxymethylaminomethyl (cmnm) group at the wobble position (U34) of certain tRNAs, forming tRNA-cmnm(5)s(2)U34. This chain is tRNA modification GTPase MnmE, found in Yersinia enterocolitica serotype O:8 / biotype 1B (strain NCTC 13174 / 8081).